The chain runs to 165 residues: Protein-export protein SecB (165 aa).

It belongs to the SecB family. Homotetramer, a dimer of dimers. One homotetramer interacts with 1 SecA dimer.

The protein resides in the cytoplasm. In terms of biological role, one of the proteins required for the normal export of preproteins out of the cell cytoplasm. It is a molecular chaperone that binds to a subset of precursor proteins, maintaining them in a translocation-competent state. It also specifically binds to its receptor SecA. The protein is Protein-export protein SecB of Colwellia psychrerythraea (strain 34H / ATCC BAA-681) (Vibrio psychroerythus).